Here is a 521-residue protein sequence, read N- to C-terminus: Outer membrane protein assembly factor BamB (521 aa).

An N-terminal signal peptide occupies residues 1–19 (MKKLFLVIVPLLLSLLATS). Cys20 is lipidated: N-palmitoyl cysteine. A lipid anchor (S-diacylglycerol cysteine) is attached at Cys20. The segment at 418–521 (KSGSIESSPK…IGDFSKGDSD (104 aa)) is disordered. Residues 429-444 (LPDKKVDSNKTSKNDT) are compositionally biased toward basic and acidic residues. The segment covering 445-477 (DSNPATTATSTKDIQNPANQEMINSTPVSNTST) has biased composition (polar residues).

It belongs to the BamB family. In terms of assembly, part of the Bam complex.

It localises to the cell outer membrane. In terms of biological role, part of the outer membrane protein assembly complex, which is involved in assembly and insertion of beta-barrel proteins into the outer membrane. This chain is Outer membrane protein assembly factor BamB, found in Francisella salina.